The primary structure comprises 1080 residues: DNA polymerase II large subunit (1080 aa).

It belongs to the archaeal DNA polymerase II family. In terms of assembly, heterodimer of a large subunit and a small subunit.

The enzyme catalyses DNA(n) + a 2'-deoxyribonucleoside 5'-triphosphate = DNA(n+1) + diphosphate. The catalysed reaction is Exonucleolytic cleavage in the 3'- to 5'-direction to yield nucleoside 5'-phosphates.. In terms of biological role, possesses two activities: a DNA synthesis (polymerase) and an exonucleolytic activity that degrades single-stranded DNA in the 3'- to 5'-direction. Has a template-primer preference which is characteristic of a replicative DNA polymerase. The chain is DNA polymerase II large subunit from Picrophilus torridus (strain ATCC 700027 / DSM 9790 / JCM 10055 / NBRC 100828 / KAW 2/3).